A 244-amino-acid polypeptide reads, in one-letter code: Leucyl/phenylalanyl-tRNA--protein transferase (244 aa).

A disordered region spans residues 1–22 (MHSQPYLLSPAPNNTPFPPAEH).

The protein belongs to the L/F-transferase family.

The protein resides in the cytoplasm. The catalysed reaction is N-terminal L-lysyl-[protein] + L-leucyl-tRNA(Leu) = N-terminal L-leucyl-L-lysyl-[protein] + tRNA(Leu) + H(+). It carries out the reaction N-terminal L-arginyl-[protein] + L-leucyl-tRNA(Leu) = N-terminal L-leucyl-L-arginyl-[protein] + tRNA(Leu) + H(+). It catalyses the reaction L-phenylalanyl-tRNA(Phe) + an N-terminal L-alpha-aminoacyl-[protein] = an N-terminal L-phenylalanyl-L-alpha-aminoacyl-[protein] + tRNA(Phe). In terms of biological role, functions in the N-end rule pathway of protein degradation where it conjugates Leu, Phe and, less efficiently, Met from aminoacyl-tRNAs to the N-termini of proteins containing an N-terminal arginine or lysine. This is Leucyl/phenylalanyl-tRNA--protein transferase from Xylella fastidiosa (strain M12).